A 324-amino-acid chain; its full sequence is Serine racemase (324 aa).

ATP is bound by residues serine 32, lysine 51, and threonine 52. The active-site Proton acceptor is lysine 56. Residue lysine 56 is modified to N6-(pyridoxal phosphate)lysine. A Ca(2+)-binding site is contributed by threonine 78. Serine 81 acts as the Proton acceptor in catalysis. Asparagine 83 provides a ligand contact to pyridoxal 5'-phosphate. Residues glutamine 86 and tyrosine 118 each contribute to the ATP site. Mg(2+) is bound at residue aspartate 175. Pyridoxal 5'-phosphate contacts are provided by glycine 182, glycine 183, glycine 184, and glycine 185. Ca(2+)-binding residues include glutamate 207, alanine 211, and aspartate 213. Glutamate 207, alanine 211, and aspartate 213 together coordinate Mg(2+). Residues glutamate 207, alanine 211, and aspartate 213 each coordinate Mn(2+). An ATP-binding site is contributed by lysine 277. Residue serine 310 coordinates pyridoxal 5'-phosphate. Asparagine 313 provides a ligand contact to ATP.

Belongs to the serine/threonine dehydratase family. As to quaternary structure, homodimer. Mg(2+) is required as a cofactor. Requires Mn(2+) as cofactor. It depends on Ca(2+) as a cofactor. Pyridoxal 5'-phosphate serves as cofactor.

It catalyses the reaction L-serine = D-serine. The catalysed reaction is L-serine = pyruvate + NH4(+). The enzyme catalyses D-serine = pyruvate + NH4(+). In terms of biological role, catalyzes the synthesis of D-serine from L-serine. Has dehydratase activity towards both L-serine and D-serine. The protein is Serine racemase (srr) of Dictyostelium discoideum (Social amoeba).